Reading from the N-terminus, the 479-residue chain is F-box/LRR-repeat protein 16 (479 aa).

The tract at residues 1–62 (MSSPGIDGDP…PTLPPPSLAA (62 aa)) is disordered. Pro residues predominate over residues 47–60 (CQPPPPPTLPPPSL). Residue R92 is modified to Omega-N-methylarginine. In terms of domain architecture, F-box spans 94 to 139 (PLATDEKILNGLFWYFSACEKCVLAQVCKAWRRVLYQPKFWAGLTP). 7 LRR repeats span residues 244 to 266 (ITSL…ISQL), 267 to 290 (LPNL…YFTA), 319 to 343 (LPNL…LVAE), 345 to 369 (LRKL…YVAC), 371 to 395 (LHRL…YLST), 396 to 420 (MSSL…HLLA), and 446 to 470 (LQEL…YFSQ).

Interacts with SKP1 and CUL1.

Its function is as follows. Substrate-recognition component of the SCF (SKP1-CUL1-F-box protein)-type E3 ubiquitin ligase complex. This is F-box/LRR-repeat protein 16 (FBXL16) from Homo sapiens (Human).